The sequence spans 360 residues: Phosphoserine aminotransferase (360 aa).

L-glutamate is bound at residue Arg-42. Pyridoxal 5'-phosphate-binding residues include Trp-102, Thr-152, Asp-171, and Gln-194. Position 195 is an N6-(pyridoxal phosphate)lysine (Lys-195). A pyridoxal 5'-phosphate-binding site is contributed by 237–238; the sequence is NT.

It belongs to the class-V pyridoxal-phosphate-dependent aminotransferase family. SerC subfamily. In terms of assembly, homodimer. Requires pyridoxal 5'-phosphate as cofactor.

The protein localises to the cytoplasm. It carries out the reaction O-phospho-L-serine + 2-oxoglutarate = 3-phosphooxypyruvate + L-glutamate. The catalysed reaction is 4-(phosphooxy)-L-threonine + 2-oxoglutarate = (R)-3-hydroxy-2-oxo-4-phosphooxybutanoate + L-glutamate. It functions in the pathway amino-acid biosynthesis; L-serine biosynthesis; L-serine from 3-phospho-D-glycerate: step 2/3. It participates in cofactor biosynthesis; pyridoxine 5'-phosphate biosynthesis; pyridoxine 5'-phosphate from D-erythrose 4-phosphate: step 3/5. In terms of biological role, catalyzes the reversible conversion of 3-phosphohydroxypyruvate to phosphoserine and of 3-hydroxy-2-oxo-4-phosphonooxybutanoate to phosphohydroxythreonine. This chain is Phosphoserine aminotransferase, found in Coxiella burnetii (strain CbuG_Q212) (Coxiella burnetii (strain Q212)).